The chain runs to 517 residues: Xylosidase/arabinosidase (517 aa).

Aspartate 15 serves as the catalytic Proton acceptor. Glutamate 185 serves as the catalytic Proton donor.

This sequence belongs to the glycosyl hydrolase 43 family.

It carries out the reaction Hydrolysis of (1-&gt;4)-beta-D-xylans, to remove successive D-xylose residues from the non-reducing termini.. It catalyses the reaction Hydrolysis of terminal non-reducing alpha-L-arabinofuranoside residues in alpha-L-arabinosides.. In terms of biological role, has a 1.6-fold higher activity as an arabinosidase than as a beta-xylosidase when tested on the substrates nitrophenyl-beta-D-xylopyranoside and P-nitrophenyl-alpha-L-arabinofuranoside. The protein is Xylosidase/arabinosidase (xylB) of Butyrivibrio fibrisolvens.